A 75-amino-acid chain; its full sequence is UPF0729 protein C18orf32 homolog (75 aa).

The segment at 1–37 (MVCIPCIVIPVLLWVYKRFLEPVLYPIISPIISRFWR) is necessary for its localzation to the endoplasmic reticulum and lipid droplets. A compositionally biased stretch (polar residues) spans 43–65 (DTPQQKTSTAECNGAANGSTANG). The segment at 43–75 (DTPQQKTSTAECNGAANGSTANGPKTVADKKAD) is disordered.

The protein belongs to the UPF0729 family.

The protein localises to the endoplasmic reticulum. The protein resides in the lipid droplet. The sequence is that of UPF0729 protein C18orf32 homolog from Danio rerio (Zebrafish).